We begin with the raw amino-acid sequence, 299 residues long: Putative transposase InsZ (299 aa).

Basic residues predominate over residues 276 to 291 (PSRPRSVKISKTRYPV). A disordered region spans residues 276–299 (PSRPRSVKISKTRYPVKHSAAPLK).

In Escherichia coli (strain K12), this protein is Putative transposase InsZ (insZ).